The chain runs to 427 residues: Trigger factor (427 aa).

In terms of domain architecture, PPIase FKBP-type spans 163–248 (GDTVILDFEG…LHEIKTKEVP (86 aa)).

Belongs to the FKBP-type PPIase family. Tig subfamily.

Its subcellular location is the cytoplasm. It catalyses the reaction [protein]-peptidylproline (omega=180) = [protein]-peptidylproline (omega=0). In terms of biological role, involved in protein export. Acts as a chaperone by maintaining the newly synthesized protein in an open conformation. Functions as a peptidyl-prolyl cis-trans isomerase. This is Trigger factor from Listeria monocytogenes serotype 4a (strain HCC23).